A 253-amino-acid chain; its full sequence is Ribosomal RNA small subunit methyltransferase J (253 aa).

S-adenosyl-L-methionine is bound by residues 98-99 (RD), 114-115 (ER), 150-151 (SS), and Asp-172.

This sequence belongs to the methyltransferase superfamily. RsmJ family.

The protein resides in the cytoplasm. The enzyme catalyses guanosine(1516) in 16S rRNA + S-adenosyl-L-methionine = N(2)-methylguanosine(1516) in 16S rRNA + S-adenosyl-L-homocysteine + H(+). Its function is as follows. Specifically methylates the guanosine in position 1516 of 16S rRNA. The chain is Ribosomal RNA small subunit methyltransferase J from Shewanella pealeana (strain ATCC 700345 / ANG-SQ1).